The primary structure comprises 84 residues: Toxin Cll9 (84 aa).

The first 19 residues, 1–19 (MNSLLMITACLILIGTVWA), serve as a signal peptide directing secretion. In terms of domain architecture, LCN-type CS-alpha/beta spans 20 to 83 (EDGYLFDKRK…ISRTPGKTCK (64 aa)). Intrachain disulfides connect C31–C82, C35–C58, C44–C63, and C48–C65.

Expressed by the venom gland.

The protein localises to the secreted. Beta toxins bind voltage-independently at site-4 of sodium channels (Nav) and shift the voltage of activation toward more negative potentials thereby affecting sodium channel activation and promoting spontaneous and repetitive firing. Has some action on peripheral ganglia, but not on other sodium channels such as those from cerebellum granular cells in culture. Induces sleep, suggesting a strong antiepileptic action. The sequence is that of Toxin Cll9 from Centruroides limpidus (Mexican scorpion).